A 149-amino-acid chain; its full sequence is Angiogenin (149 aa).

An N-terminal signal peptide occupies residues 1–24; sequence MVMGLGPLVLIFVLGLGVTPPTLA. Glutamine 25 is modified (pyrrolidone carboxylic acid). Histidine 37 serves as the catalytic Proton acceptor. A tRNA-binding site is contributed by arginine 45. Disulfide bonds link cysteine 50–cysteine 105, cysteine 63–cysteine 116, and cysteine 81–cysteine 131. A Nucleolar localization signal motif is present at residues 55–59; sequence KRRDL. 2 residues coordinate tRNA: cysteine 105 and isoleucine 127. Catalysis depends on histidine 138, which acts as the Proton donor.

This sequence belongs to the pancreatic ribonuclease family. Homodimer. Interacts with RNH1; inhibiting ANG ribonuclease activity. Interacts with PCNA.

It localises to the secreted. The protein localises to the nucleus. The protein resides in the nucleolus. It is found in the cytoplasm. Its subcellular location is the stress granule. Its activity is regulated as follows. Has weak tRNA ribonuclease activity by itself due to partial autoinhibition by its C-terminus, which folds into a short alpha-helix that partially occludes the substrate-binding site. In absence of stress, the ribonuclease activity is inhibited by RNH1 in the cytoplasm. In response to stress, dissociates from RNH1 in the cytoplasm and associates with cytoplasmic ribosomes with vacant A-sites: ribosomes directly activate the tRNA ribonuclease activity of ANG by refolding the C-terminal alpha-helix. In response to stress, the angiogenic activity of ANG is inhibited by RNH1 in the nucleus. Secreted ribonuclease that can either promote or restrict cell proliferation of target cells, depending on the context. Endocytosed in target cells via its receptor PLXNB2 and translocates to the cytoplasm or nucleus. Under stress conditions, localizes to the cytoplasm and promotes the assembly of stress granules (SGs): specifically cleaves a subset of tRNAs within anticodon loops to produce tRNA-derived stress-induced fragments (tiRNAs), resulting in translation repression and inhibition of cell proliferation. tiRNas also prevent formation of apoptosome, thereby promoting cell survival. Preferentially cleaves RNAs between a pyrimidine and an adenosine residue, suggesting that it cleaves the anticodon loop of tRNA(Ala) (32-UUAGCAU-38) after positions 33 and 36. Cleaves a subset of tRNAs, including tRNA(Ala), tRNA(Glu), tRNA(Gly), tRNA(Lys), tRNA(Val), tRNA(His), tRNA(Asp) and tRNA(Sec). Under growth conditions and in differentiated cells, translocates to the nucleus and stimulates ribosomal RNA (rRNA) transcription, including that containing the initiation site sequences of 45S rRNA, thereby promoting cell growth and proliferation. Angiogenin induces vascularization of normal and malignant tissues via its ability to promote rRNA transcription. Involved in hematopoietic stem and progenitor cell (HSPC) growth and survival by promoting rRNA transcription in growth conditions and inhibiting translation in response to stress, respectively. Mediates the crosstalk between myeloid and intestinal epithelial cells to protect the intestinal epithelial barrier integrity: secreted by myeloid cells and promotes intestinal epithelial cells proliferation and survival. Also mediates osteoclast-endothelial cell crosstalk in growing bone: produced by osteoclasts and protects the neighboring vascular cells against senescence by promoting rRNA transcription. In Oryctolagus cuniculus (Rabbit), this protein is Angiogenin (ANG).